A 118-amino-acid chain; its full sequence is Protein yippee-like 1 (118 aa).

The 98-residue stretch at 19–116 (RTYSCIHCRA…IELAHMIKDN (98 aa)) folds into the Yippee domain. Zn(2+) is bound by residues cysteine 23, cysteine 26, cysteine 79, and cysteine 82. A Nuclear localization signal motif is present at residues 99–104 (KYKEGK).

Belongs to the yippee family.

It is found in the nucleus. Its function is as follows. May play a role in epithelioid conversion of fibroblasts. The polypeptide is Protein yippee-like 1 (Ypel1) (Mus musculus (Mouse)).